The primary structure comprises 224 residues: Probable septum site-determining protein MinC (224 aa).

The protein belongs to the MinC family. In terms of assembly, interacts with MinD and FtsZ.

Its function is as follows. Cell division inhibitor that blocks the formation of polar Z ring septums. Rapidly oscillates between the poles of the cell to destabilize FtsZ filaments that have formed before they mature into polar Z rings. Prevents FtsZ polymerization. The chain is Probable septum site-determining protein MinC from Shewanella amazonensis (strain ATCC BAA-1098 / SB2B).